A 1380-amino-acid polypeptide reads, in one-letter code: DNA-directed RNA polymerase subunit beta (1380 aa).

It belongs to the RNA polymerase beta chain family. As to quaternary structure, the RNAP catalytic core consists of 2 alpha, 1 beta, 1 beta' and 1 omega subunit. When a sigma factor is associated with the core the holoenzyme is formed, which can initiate transcription.

It carries out the reaction RNA(n) + a ribonucleoside 5'-triphosphate = RNA(n+1) + diphosphate. DNA-dependent RNA polymerase catalyzes the transcription of DNA into RNA using the four ribonucleoside triphosphates as substrates. The polypeptide is DNA-directed RNA polymerase subunit beta (Ehrlichia ruminantium (strain Gardel)).